Reading from the N-terminus, the 426-residue chain is 3-isopropylmalate dehydratase large subunit (426 aa).

C307, C367, and C370 together coordinate [4Fe-4S] cluster.

The protein belongs to the aconitase/IPM isomerase family. LeuC type 2 subfamily. Heterodimer of LeuC and LeuD. The cofactor is [4Fe-4S] cluster.

The catalysed reaction is (2R,3S)-3-isopropylmalate = (2S)-2-isopropylmalate. It functions in the pathway amino-acid biosynthesis; L-leucine biosynthesis; L-leucine from 3-methyl-2-oxobutanoate: step 2/4. Its function is as follows. Catalyzes the isomerization between 2-isopropylmalate and 3-isopropylmalate, via the formation of 2-isopropylmaleate. This chain is 3-isopropylmalate dehydratase large subunit, found in Sulfurovum sp. (strain NBC37-1).